We begin with the raw amino-acid sequence, 351 residues long: UDP-N-acetylglucosamine--N-acetylmuramyl-(pentapeptide) pyrophosphoryl-undecaprenol N-acetylglucosamine transferase (351 aa).

Residues 13–15 (TGG), Asn-125, Arg-161, Ser-189, Ile-241, 260–265 (ALTVCE), and Gln-285 each bind UDP-N-acetyl-alpha-D-glucosamine.

It belongs to the glycosyltransferase 28 family. MurG subfamily.

It localises to the cell inner membrane. The enzyme catalyses di-trans,octa-cis-undecaprenyl diphospho-N-acetyl-alpha-D-muramoyl-L-alanyl-D-glutamyl-meso-2,6-diaminopimeloyl-D-alanyl-D-alanine + UDP-N-acetyl-alpha-D-glucosamine = di-trans,octa-cis-undecaprenyl diphospho-[N-acetyl-alpha-D-glucosaminyl-(1-&gt;4)]-N-acetyl-alpha-D-muramoyl-L-alanyl-D-glutamyl-meso-2,6-diaminopimeloyl-D-alanyl-D-alanine + UDP + H(+). It participates in cell wall biogenesis; peptidoglycan biosynthesis. Cell wall formation. Catalyzes the transfer of a GlcNAc subunit on undecaprenyl-pyrophosphoryl-MurNAc-pentapeptide (lipid intermediate I) to form undecaprenyl-pyrophosphoryl-MurNAc-(pentapeptide)GlcNAc (lipid intermediate II). The chain is UDP-N-acetylglucosamine--N-acetylmuramyl-(pentapeptide) pyrophosphoryl-undecaprenol N-acetylglucosamine transferase from Haemophilus influenzae (strain PittGG).